The primary structure comprises 399 residues: Cytochrome P450 FAS1 (399 aa).

C349 provides a ligand contact to heme.

Belongs to the cytochrome P450 family. Requires heme as cofactor.

The protein localises to the cytoplasm. Functionally, may be involved in the biosynthesis of cytokinin phytohormones and in host plant fasciation (leafy gall). This chain is Cytochrome P450 FAS1 (fas1), found in Rhodococcoides fascians (Rhodococcus fascians).